Reading from the N-terminus, the 651-residue chain is Probable potassium transport system protein Kup (651 aa).

The next 12 helical transmembrane spans lie at 30 to 50 (LALAALGIVFGDIGTSVLYSL), 71 to 91 (IISMIFWSILLVVCVKYVIFV), 124 to 144 (LLLGIVGAGLFYGDSFITPAI), 158 to 178 (PDAEKIVLPASVVILTLLFIV), 190 to 210 (FGPVMATWFLTLAALGIPWII), 233 to 253 (AMAFIAMGAVVLTITGAEALY), 268 to 288 (WFGLVLPCLLINYLGQGAMIL), 310 to 330 (LVTIATMATVIASQAVISGAF), 358 to 378 (IYIPEVNWTLFIGVLALILIF), 387 to 407 (AYGLAVTGTFLLTTSLFLVLA), 413 to 433 (WPMWALIFFGVIVGGVELSIF), and 437 to 457 (LLKIASGGWIPLLFATIVVII).

This sequence belongs to the HAK/KUP transporter (TC 2.A.72) family.

The protein resides in the cell membrane. It catalyses the reaction K(+)(in) + H(+)(in) = K(+)(out) + H(+)(out). Its function is as follows. Transport of potassium into the cell. Likely operates as a K(+):H(+) symporter. The protein is Probable potassium transport system protein Kup of Cutibacterium acnes (strain DSM 16379 / KPA171202) (Propionibacterium acnes).